The following is a 608-amino-acid chain: Elongation factor 4 (608 aa).

The 183-residue stretch at 11-193 (DRIRNFSIIA…QIVQKIPAPS (183 aa)) folds into the tr-type G domain. GTP-binding positions include 23–28 (DHGKST) and 140–143 (NKID).

Belongs to the TRAFAC class translation factor GTPase superfamily. Classic translation factor GTPase family. LepA subfamily.

It is found in the cell membrane. It carries out the reaction GTP + H2O = GDP + phosphate + H(+). Functionally, required for accurate and efficient protein synthesis under certain stress conditions. May act as a fidelity factor of the translation reaction, by catalyzing a one-codon backward translocation of tRNAs on improperly translocated ribosomes. Back-translocation proceeds from a post-translocation (POST) complex to a pre-translocation (PRE) complex, thus giving elongation factor G a second chance to translocate the tRNAs correctly. Binds to ribosomes in a GTP-dependent manner. This is Elongation factor 4 from Anoxybacillus flavithermus (strain DSM 21510 / WK1).